The following is a 225-amino-acid chain: tRNA (guanine-N(1)-)-methyltransferase (225 aa).

S-adenosyl-L-methionine is bound by residues glycine 112 and 132 to 137 (IGDYVL).

This sequence belongs to the RNA methyltransferase TrmD family. Homodimer.

It localises to the cytoplasm. It catalyses the reaction guanosine(37) in tRNA + S-adenosyl-L-methionine = N(1)-methylguanosine(37) in tRNA + S-adenosyl-L-homocysteine + H(+). Functionally, specifically methylates guanosine-37 in various tRNAs. This Porphyromonas gingivalis (strain ATCC 33277 / DSM 20709 / CIP 103683 / JCM 12257 / NCTC 11834 / 2561) protein is tRNA (guanine-N(1)-)-methyltransferase.